Consider the following 553-residue polypeptide: Chaperonin GroEL (553 aa).

Residues Thr30–Pro33, Lys51, Asp87–Thr91, Gly415, and Asp495 each bind ATP.

Belongs to the chaperonin (HSP60) family. As to quaternary structure, forms a cylinder of 14 subunits composed of two heptameric rings stacked back-to-back. Interacts with the co-chaperonin GroES.

Its subcellular location is the cytoplasm. It catalyses the reaction ATP + H2O + a folded polypeptide = ADP + phosphate + an unfolded polypeptide.. Its function is as follows. Together with its co-chaperonin GroES, plays an essential role in assisting protein folding. The GroEL-GroES system forms a nano-cage that allows encapsulation of the non-native substrate proteins and provides a physical environment optimized to promote and accelerate protein folding. This chain is Chaperonin GroEL, found in Buchnera aphidicola subsp. Tuberolachnus salignus.